Here is a 142-residue protein sequence, read N- to C-terminus: Large ribosomal subunit protein uL13 (142 aa).

The protein belongs to the universal ribosomal protein uL13 family. As to quaternary structure, part of the 50S ribosomal subunit.

This protein is one of the early assembly proteins of the 50S ribosomal subunit, although it is not seen to bind rRNA by itself. It is important during the early stages of 50S assembly. This is Large ribosomal subunit protein uL13 from Mannheimia succiniciproducens (strain KCTC 0769BP / MBEL55E).